A 1103-amino-acid polypeptide reads, in one-letter code: Bifunctional cytochrome P450/NADPH--P450 reductase (1103 aa).

A cytochrome P450 region spans residues 1 to 491 (MSTPKAEPVP…SSSEHADHAA (491 aa)). Cys-415 contacts heme. The interval 492–1103 (GHGKAGAAKK…KERYTTDIFA (612 aa)) is NADPH--P450 reductase. Residues 508–649 (MHVYYGSNTG…DFDTWGETSF (142 aa)) enclose the Flavodoxin-like domain. Residues 514 to 519 (SNTGTC), 561 to 564 (SYEG), Cys-596, and Thr-604 contribute to the FMN site. The 240-residue stretch at 685–924 (LQLQEGLVVE…RPSHTGFKPP (240 aa)) folds into the FAD-binding FR-type domain.

In the N-terminal section; belongs to the cytochrome P450 family. Requires heme as cofactor. FAD serves as cofactor. The cofactor is FMN.

It carries out the reaction 2 oxidized [cytochrome P450] + NADPH = 2 reduced [cytochrome P450] + NADP(+) + H(+). It catalyses the reaction an organic molecule + reduced [NADPH--hemoprotein reductase] + O2 = an alcohol + oxidized [NADPH--hemoprotein reductase] + H2O + H(+). Functions as a fatty acid monooxygenase. Also displays a NADPH-dependent reductase activity in the C-terminal domain, which allows electron transfer from NADPH to the heme iron of the cytochrome P450 N-terminal domain. This is Bifunctional cytochrome P450/NADPH--P450 reductase from Aspergillus oryzae (strain ATCC 42149 / RIB 40) (Yellow koji mold).